The primary structure comprises 894 residues: Myb-like protein K (894 aa).

Positions 93–139 are enriched in low complexity; it reads LQQQQQSPVTNVATNTPPTLQHSISSPSPNNFNNNNNANNQFLSPNS. Disordered stretches follow at residues 93 to 221, 299 to 353, 492 to 539, and 601 to 659; these read LQQQ…SASS, QVGN…QPIT, QQQQ…LEMI, and AATT…HWTS. Residues 140–149 are compositionally biased toward polar residues; sequence PQVAKSSPSQ. A compositionally biased stretch (low complexity) spans 150–221; that stretch reads NNPSTPIANT…SQSLNSSASS (72 aa). Over residues 300–309 the composition is skewed to polar residues; it reads VGNPMQQSND. Low complexity-rich tracts occupy residues 310-353 and 492-527; these read MQPQ…QPIT and QQQQ…PQQM. Basic and acidic residues-rich tracts occupy residues 611 to 640 and 649 to 659; these read GKEE…SKKD and ASKEKTSHWTS. Residues 649–704 form the HTH myb-type domain; the sequence is ASKEKTSHWTSEEHNKFLEAVQQFGIKDYHAIAKFVQTRNHHQVRTHVNTYLKNQK. A DNA-binding region (H-T-H motif) is located at residues 677 to 700; the sequence is YHAIAKFVQTRNHHQVRTHVNTYL. The interval 703-852 is disordered; that stretch reads QKKAEAATSS…EYNSGFDSNS (150 aa). 3 stretches are compositionally biased toward low complexity: residues 710 to 742, 751 to 805, and 815 to 845; these read TSST…QPPI, QQQQ…QQPQ, and PPNN…NEYN.

Its subcellular location is the nucleus. The polypeptide is Myb-like protein K (mybK) (Dictyostelium discoideum (Social amoeba)).